A 432-amino-acid chain; its full sequence is Transcriptional adapter 3-B (432 aa).

Disordered stretches follow at residues 90–124 and 275–315; these read HELGTPIKHSKPKKQKLDGKGSHASGPGPGRPKSR and SPVE…KSLE. The span at 293–305 shows a compositional bias: polar residues; it reads DGASTSPRSQNKP. A coiled-coil region spans residues 335–398; that stretch reads ADDSEDEVLA…NEVMDAFRKI (64 aa).

Belongs to the NGG1 family.

The protein localises to the nucleus. Functions as a component of the PCAF complex. The PCAF complex is capable of efficiently acetylating histones in a nucleosomal context. This Xenopus laevis (African clawed frog) protein is Transcriptional adapter 3-B (tada3-b).